The sequence spans 338 residues: MTLIQKIQQQNNLTQQDINEFIQTLINPDIENEEKASLLSEYTNRPLNQVEVTYLVQAMIQTMYPVQPVYPEAMCVCGTGGDKSNSFNISTTVSFVVAAANVNVLKHGNKSITSASGSSDLLNKMGIAATHVPDVEGRMNETGLAFLNATDTYPVMKHIQPIRKMMDGPTIFNILGPMIHPYKLDYQVVGVFNPDFVKAMAETLYDLKRKRAIVLHGANGMDEATLSGDNLIYEVNQETGVTSYYLNAEDVGLKPAANGTLRGGTPAENLEITLDILTGKDHSSKRDVVVLNAGIALYVSEKADSIKEGVQLAQQLIDDGKAFEQYKKTGGQVYDHIG.

5-phospho-alpha-D-ribose 1-diphosphate is bound by residues Gly-78, Gly-81 to Asp-82, Ser-86, Asn-88 to Thr-91, Lys-106 to Ser-114, and Ser-118. Residue Gly-78 participates in anthranilate binding. Residue Ser-90 coordinates Mg(2+). Position 109 (Asn-109) interacts with anthranilate. Arg-163 is an anthranilate binding site. 2 residues coordinate Mg(2+): Asp-222 and Glu-223.

This sequence belongs to the anthranilate phosphoribosyltransferase family. Homodimer. Mg(2+) serves as cofactor.

The catalysed reaction is N-(5-phospho-beta-D-ribosyl)anthranilate + diphosphate = 5-phospho-alpha-D-ribose 1-diphosphate + anthranilate. It functions in the pathway amino-acid biosynthesis; L-tryptophan biosynthesis; L-tryptophan from chorismate: step 2/5. Its function is as follows. Catalyzes the transfer of the phosphoribosyl group of 5-phosphorylribose-1-pyrophosphate (PRPP) to anthranilate to yield N-(5'-phosphoribosyl)-anthranilate (PRA). The polypeptide is Anthranilate phosphoribosyltransferase (Staphylococcus carnosus (strain TM300)).